We begin with the raw amino-acid sequence, 753 residues long: Cytoplasmic polyadenylation element-binding protein 3 (753 aa).

The tract at residues 111 to 286 (VGESTPSSAG…NGSWHGELPP (176 aa)) is disordered. Basic and acidic residues-rich tracts occupy residues 131–142 (KPTEKISVDEPP) and 175–188 (FGKE…EVVK). Over residues 227 to 239 (SPAKISSNSSSSS) the composition is skewed to low complexity. Residues 265–279 (SRQGLSNRDNLSNGS) are compositionally biased toward polar residues. Residues 298–320 (IFVGGVPWDITEAALKDSFGEFG) form the RRM domain. A disordered region spans residues 567–589 (KAYAGPHRRPHLTSNSLSKSHGC). Over residues 578–589 (LTSNSLSKSHGC) the composition is skewed to polar residues.

In terms of biological role, cytoplasmic polyadenylation element binding protein that binds to and regulates the translation of specific mRNAs. This is Cytoplasmic polyadenylation element-binding protein 3 (cpb-3) from Caenorhabditis briggsae.